A 561-amino-acid polypeptide reads, in one-letter code: Lysine--tRNA ligase (561 aa).

Residues E409 and E416 each coordinate Mg(2+).

This sequence belongs to the class-II aminoacyl-tRNA synthetase family. As to quaternary structure, homodimer. Mg(2+) serves as cofactor.

Its subcellular location is the cytoplasm. It carries out the reaction tRNA(Lys) + L-lysine + ATP = L-lysyl-tRNA(Lys) + AMP + diphosphate. This Trichormus variabilis (strain ATCC 29413 / PCC 7937) (Anabaena variabilis) protein is Lysine--tRNA ligase.